A 300-amino-acid chain; its full sequence is HTH-type transcriptional activator NahR (300 aa).

An HTH lysR-type domain is found at 6–63 (LDLNLLVVFNQLLVDRRVSITAENLGLTQPAVSNALKRLRTSLQDPLFVRTHQGMEPT). The H-T-H motif DNA-binding region spans 23–42 (VSITAENLGLTQPAVSNALK).

It belongs to the LysR transcriptional regulatory family.

It is found in the cytoplasm. Regulates the expression of the naphthalene (nahA-F) and salicylate (nahG-M) metabolism genes. This Pseudomonas putida (Arthrobacter siderocapsulatus) protein is HTH-type transcriptional activator NahR (nahR).